Consider the following 208-residue polypeptide: NAD(P)H-hydrate epimerase (208 aa).

The 199-residue stretch at 10–208 folds into the YjeF N-terminal domain; sequence IRDAERQTLA…TLGVIMTPAN (199 aa). Residue 54–58 participates in (6S)-NADPHX binding; it reads NNGGD. N55 and D117 together coordinate K(+). Residues 121–127 and D150 contribute to the (6S)-NADPHX site; that span reads GIGLNRP. S153 lines the K(+) pocket.

The protein belongs to the NnrE/AIBP family. K(+) is required as a cofactor.

The catalysed reaction is (6R)-NADHX = (6S)-NADHX. It carries out the reaction (6R)-NADPHX = (6S)-NADPHX. Functionally, catalyzes the epimerization of the S- and R-forms of NAD(P)HX, a damaged form of NAD(P)H that is a result of enzymatic or heat-dependent hydration. This is a prerequisite for the S-specific NAD(P)H-hydrate dehydratase to allow the repair of both epimers of NAD(P)HX. This is NAD(P)H-hydrate epimerase from Achromobacter xylosoxidans (strain A8).